A 675-amino-acid polypeptide reads, in one-letter code: Protein PALS1 (675 aa).

Residues 1-345 (MTTSYMNGHV…QQIKPPPAKE (345 aa)) are required for the correct localization of PALS1 and PATJ at cell-cell contacts and the normal formation of tight junctions and adherens junctions. 2 positions are modified to phosphoserine: serine 14 and serine 25. Positions 21 to 140 (LDLASPEEYP…LKHIQHTLVD (120 aa)) are interaction with PARD6B. The disordered stretch occupies residues 51–79 (RRSAQLERIRQQQEDMRRRREEEGKKQEL). Over residues 54–79 (AQLERIRQQQEDMRRRREEEGKKQEL) the composition is skewed to basic and acidic residues. Phosphoserine is present on residues serine 83 and serine 84. L27 domains are found at residues 120–177 (NILD…SKAS) and 179–235 (PFPL…MQLE). The interaction with LIN7C stretch occupies residues 181–243 (PLIANVQDLV…LEPITDERVY (63 aa)). One can recognise a PDZ domain in the interval 256-336 (IVRIEKARDI…TLTFVLIPSQ (81 aa)). Residues 345–417 (ETVIHVKAHF…PGKSFQQQRE (73 aa)) form the SH3 domain. Residues 479–660 (KRPIILIGPQ…AYQELLRLIN (182 aa)) enclose the Guanylate kinase-like domain. Residue 486-493 (GPQNCGQN) coordinates ATP.

Belongs to the MAGUK family. As to quaternary structure, heterodimer with MPP1. Forms a heterotrimeric complex composed of PALS1, LIN7B and PATJ; the N-terminal L27 domain of PALS1 interacts with the L27 domain of PATJ and the C-terminal L27 domain of PALS1 interacts with the L27 domain of LIN7B. Component of a complex composed of PALS1, CRB1 and MPP4. Component of a complex whose core is composed of ARHGAP17, AMOT, PALS1, PATJ and PARD3/PAR3. Component of a complex composed of PALS1, CRB1 and EPB41L5. Within the complex, interacts (via HOOK domain) with EPB41L5 (via FERM domain), and interacts with CRB1 (via intracellular domain). Component of a complex composed of PALS1, MPP3 and CRB1; PALS1 acts as a bridging protein between MPP3 (via guanylate kinase-like domain) and CRB1. Component of a complex composed of CRB3, PALS1 and PATJ. As part of the Crumbs complex; interacts with WWP1, the interaction is enhanced by AMOTL2 and facilitates WWP1 localization to the plasma membrane. The Crumbs complex promotes monoubiquitination of AMOTL2 by WWP1, which activates the Hippo signaling pathway. Interacts (via PDZ domain) with PATJ (via N-terminus). Interacts with EZR. Interacts (via PDZ domain) with CRB1 (via C-terminal ERLI motif). While the PDZ domain is sufficient for interaction with CRB1, the adjacent SH3 and guanylate kinase-like domains are likely to contribute to a high affinity interaction. Interacts with WWTR1/TAZ (via WW domain). Interacts with MPP7. Interacts (via PDZ domain) with CRB3 (via C-terminus). Interacts with LIN7C. Interacts with MPDZ. Interacts with PARD6B. Interacts with SC6A1. Interacts with CDH5; the interaction promotes PALS1 localization to cell junctions and is required for CDH5-mediated vascular lumen formation and endothelial cell. Interacts with NPHP1 (via coiled coil and SH3 domains). Interacts with NPHP4. Interacts with CRB2. Expressed in the retinal pigment epithelium (at protein level). Expressed in the vascular plexus of the retina (at protein level). In the brain, expressed in the dentate gyrus of hippocampus, striatum and cerebellum (at protein level). Expressed in the sciatic nerve (at protein level). Expressed in the kidney nephron (at protein level). Expressed in the lung, and heart. Expressed in placenta, brain, skeletal muscles, pancreas and liver.

The protein resides in the golgi apparatus. It localises to the cell membrane. It is found in the endomembrane system. Its subcellular location is the cell junction. The protein localises to the tight junction. The protein resides in the adherens junction. It localises to the cell projection. It is found in the axon. Its subcellular location is the perikaryon. The protein localises to the apical cell membrane. Its function is as follows. Plays a role in tight junction biogenesis and in the establishment of cell polarity in epithelial cells. Also involved in adherens junction biogenesis by ensuring correct localization of the exocyst complex protein EXOC4/SEC8 which allows trafficking of adherens junction structural component CDH1 to the cell surface. Plays a role through its interaction with CDH5 in vascular lumen formation and endothelial membrane polarity. Required during embryonic and postnatal retinal development. Required for the maintenance of cerebellar progenitor cells in an undifferentiated proliferative state, preventing premature differentiation, and is required for cerebellar histogenesis, fissure formation, cerebellar layer organization and cortical development. Plays a role in neuronal progenitor cell survival, potentially via promotion of mTOR signaling. Plays a role in the radial and longitudinal extension of the myelin sheath in Schwann cells. May modulate SC6A1/GAT1-mediated GABA uptake by stabilizing the transporter. May play a role in the T-cell receptor-mediated activation of NF-kappa-B. Required for localization of EZR to the apical membrane of parietal cells and may play a role in the dynamic remodeling of the apical cytoskeleton. Required for the normal polarized localization of the vesicular marker STX4. Required for the correct trafficking of the myelin proteins PMP22 and MAG. Involved in promoting phosphorylation and cytoplasmic retention of transcriptional coactivators YAP1 and WWTR1/TAZ which leads to suppression of TGFB1-dependent transcription of target genes such as CCN2/CTGF, SERPINE1/PAI1, SNAI1/SNAIL1 and SMAD7. In Mus musculus (Mouse), this protein is Protein PALS1.